The sequence spans 385 residues: T-box transcription factor TBX10 (385 aa).

The segment at residues 69-252 (LEMKPLWEEF…SNPFAKGFRE (184 aa)) is a DNA-binding region (T-box). 2 disordered regions span residues 283 to 310 (GSAEREKDTSKASASSSRTPTQPHNQLL) and 328 to 359 (QNLYPGSPSRAGPPRARLAPYPLPNISTAGDQ). The segment covering 293-307 (KASASSSRTPTQPHN) has biased composition (polar residues). Positions 331–347 (YPGSPSRAGPPRARLAP) are enriched in low complexity.

The protein resides in the nucleus. Probable transcriptional regulator involved in developmental processes. This Mus musculus (Mouse) protein is T-box transcription factor TBX10 (Tbx10).